Reading from the N-terminus, the 149-residue chain is Large ribosomal subunit protein bL9 (149 aa).

The protein belongs to the bacterial ribosomal protein bL9 family.

Its function is as follows. Binds to the 23S rRNA. The chain is Large ribosomal subunit protein bL9 from Clostridioides difficile (strain 630) (Peptoclostridium difficile).